A 141-amino-acid polypeptide reads, in one-letter code: Hemoglobin subunit alpha-D (141 aa).

One can recognise a Globin domain in the interval Met-1 to Arg-141. Heme b is bound by residues His-58 and His-87.

Belongs to the globin family. As to quaternary structure, heterotetramer of two alpha-D chains and two beta chains. In terms of tissue distribution, red blood cells.

Involved in oxygen transport from the lung to the various peripheral tissues. This Anser indicus (Bar-headed goose) protein is Hemoglobin subunit alpha-D (HBAD).